Consider the following 771-residue polypeptide: Tubulin monoglycylase TTLL3 (771 aa).

The disordered stretch occupies residues P70–D106. Acidic residues predominate over residues T86–D106. Residues E220–G566 enclose the TTL domain. ATP contacts are provided by residues K339, R345–G346, Q377–I380, K390–D392, and C434–N435. Position 345 (R345) interacts with a protein. Residue S437 participates in L-glutamate binding. Mg(2+) is bound by residues D512, E525, and N527. Residue E525 participates in ATP binding. Disordered stretches follow at residues L605–K640 and T682–Y713. Polar residues predominate over residues S614–E633.

Mg(2+) is required as a cofactor.

It is found in the cytoplasm. It localises to the cytoskeleton. The protein resides in the cell projection. The protein localises to the cilium. Its subcellular location is the cilium axoneme. It is found in the flagellum axoneme. It catalyses the reaction L-glutamyl-[protein] + glycine + ATP = glycyl-L-glutamyl-[protein] + ADP + phosphate + H(+). Its function is as follows. Monoglycylase which modifies alpha- and beta-tubulin, adding a single glycine on the gamma-carboxyl groups of specific glutamate residues to generate monoglycine side chains within the C-terminal tail of tubulin. Not involved in elongation step of the polyglycylation reaction. Preferentially glycylates a beta-tail peptide over the alpha-tail, although shifts its preference toward alpha-tail as beta-tail glutamylation increases. Competes with polyglutamylases for modification site on beta-tubulin substrate, thereby creating an anticorrelation between glycylation and glutamylation reactions. Not involved in elongation step of the polyglycylation reaction. This is Tubulin monoglycylase TTLL3 (ttll3) from Danio rerio (Zebrafish).